The primary structure comprises 398 residues: MLGRSGYRALPLGDFDRFQQSSFGFLGSQKGCLSPERGGVGTGADVPQSWPSCLCHGLISFLGFLLLLVTFPISGWFALKIVPTYERMIVFRLGRIRTPQGPGMVLLLPFIDSFQRVDLRTRAFNVPPCKLASKDGAVLSVGADVQFRIWDPVLSVMTVKDLNTATRMTAQNAMTKALLKRPLREIQMEKLKISDQLLLEINDVTRAWGLEVDRVELAVEAVLQPPQDSPAGPNLDSTLQQLALHFLGGSMNSMAGGAPSPGPADTVEMVSEVEPPAPQVGARSSPKQPLAEGLLTALQPFLSEALVSQVGACYQFNVVLPSGTQSAYFLDLTTGRGRVGHGVPDGIPDVVVEMAEADLRALLCRELRPLGAYMSGRLKVKGDLAMAMKLEAVLRALK.

The short motif at 6–10 is the Tyrosine-type lysosomal sorting signal element; sequence GYRAL. Position 28 is a phosphoserine (S28). The chain crosses the membrane as a helical; Signal-anchor for type III membrane protein span at residues 58–78; sequence LISFLGFLLLLVTFPISGWFA. At 79–398 the chain is on the cytoplasmic side; sequence LKIVPTYERM…KLEAVLRALK (320 aa). Positions 287-398 constitute an SCP2 domain; the sequence is KQPLAEGLLT…KLEAVLRALK (112 aa).

The protein belongs to the band 7/mec-2 family. Interacts with STOM; may redistribute STOM from the plasma membrane to late endosomes. Interacts with FBXW7 isoform 3 and CDK2. Ubiquitously expressed at low levels. Expression is highest in brain.

Its subcellular location is the membrane. It is found in the late endosome membrane. The protein localises to the membrane raft. The protein resides in the cell membrane. It localises to the cytoplasmic vesicle. May play a role in cholesterol transfer to late endosomes. May play a role in modulating membrane acid-sensing ion channels. Can specifically inhibit proton-gated current of ASIC1 isoform 1. Can increase inactivation speed of ASIC3. May be involved in regulation of proton sensing in dorsal root ganglions. May play a role in protecting FBXW7 isoform 3 from degradation. This is Stomatin-like protein 1 (STOML1) from Homo sapiens (Human).